The following is a 198-amino-acid chain: Cyclin-dependent kinase inhibitor 1B (198 aa).

Positions 1–11 are enriched in polar residues; the sequence is MSNVRVSNGSP. The interval 1-34 is disordered; it reads MSNVRVSNGSPSLERMDARQAEHPKPSACRNLFG. At Ser10 the chain carries Phosphoserine; by UHMK1. A compositionally biased stretch (basic and acidic residues) spans 14 to 25; the sequence is ERMDARQAEHPK. Residues 51 to 91 form an interaction with CDK2 region; the sequence is DMEEASQRKWNFDFQNHNPLEGRYQWQEVDKGSLPEFYYRP. Phosphotyrosine; by SRC is present on Tyr74. Positions 85-198 are disordered; that stretch reads PEFYYRPPRP…KKPGLRRHQT (114 aa). The residue at position 88 (Tyr88) is a Phosphotyrosine; by ABL, LYN and SRC. Phosphotyrosine is present on Tyr89. Positions 104-124 are enriched in polar residues; sequence QESQDVSGSRQAVPSIGSQAY. Positions 153 to 169 match the Nuclear localization signal motif; sequence KRPAADDSSSQNKRANR. Thr170 bears the Phosphothreonine mark. The segment covering 175-186 has biased composition (polar residues); sequence SDGSLNAGSVEQ. Thr187 is modified (phosphothreonine; by PKB/AKT1, CDK1 and CDK2). Thr198 carries the post-translational modification Phosphothreonine; by CaMK1, PKB/AKT1, RPS6KA1, RPS6KA3 and PIM1.

Belongs to the CDI family. Forms a ternary complex composed of CCNE1, CDK2 and CDKN1B. Interacts directly with CCNE1; the interaction is inhibited by CDK2-dependent phosphorylation on Thr-187. Interacts with COPS5, subunit of the COP9 signalosome complex; the interaction leads to CDKN1B degradation. Interacts with NUP50; the interaction leads to nuclear import and degradation of phosphorylated CDKN1B. Interacts with CCND1 and SNX6. Interacts (Thr-198-phosphorylated form) with 14-3-3 proteins, binds strongly YWHAQ, weakly YWHAE and YWHAH, but not YWHAB nor YWHAZ; the interaction with YWHAQ results in translocation to the cytoplasm. Interacts with AKT1 and LYN; the interactions lead to cytoplasmic mislocation, phosphorylation of CDKN1B and inhibition of cell cycle arrest. Forms a ternary complex with CCNA2 and CDK2; CDKN1B inhibits the kinase activity of CDK2 through conformational rearrangements. Interacts (unphosphorylated form) with CDK2. Forms a complex with CDK2 and SPDYA, but does not directly interact with SPDYA. Forms a ternary complex composed of cyclin D, CDK4 and CDKN1B. Interacts (phosphorylated on Tyr-88 and Tyr-89) with CDK4; the interaction is required for cyclin D and CDK4 complex assembly, induces nuclear translocation and activates the CDK4 kinase activity. Interacts with GRB2. Interacts with PIM1. Identified in a complex with SKP1, SKP2 and CKS1B. Interacts with UHMK1; the interaction leads to cytoplasmic mislocation, phosphorylation of CDKN1B and inhibition of cell cycle arrest. Also interacts with CDK1. Dephosphorylated on Thr-187 by PPM1H, leading to CDKN1B stability. In terms of processing, phosphorylated; phosphorylation occurs on serine, threonine and tyrosine residues. Phosphorylation on Ser-10 is the major site of phosphorylation in resting cells, takes place at the G(0)-G(1) phase and leads to protein stability. Phosphorylation on other sites is greatly enhanced by mitogens, growth factors, cMYC and in certain cancer cell lines. The phosphorylated form found in the cytoplasm is inactivate. Phosphorylation on Thr-198 is required for interaction with 14-3-3 proteins. Phosphorylation on Thr-187, by CDK1 and CDK2 leads to protein ubiquitination and proteasomal degradation. Tyrosine phosphorylation promotes this process. Phosphorylation by PKB/AKT1 can be suppressed by LY294002, an inhibitor of the catalytic subunit of PI3K. Phosphorylation on Tyr-88 and Tyr-89 has no effect on binding CDK2, but is required for binding CDK4. Dephosphorylated on tyrosine residues by G-CSF. Dephosphorylated on Thr-187 by PPM1H, leading to CDKN1B stability. Ubiquitinated; in the cytoplasm by the KPC complex (composed of RNF123/KPC1 and UBAC1/KPC2) and, in the nucleus, by SCF(SKP2). The latter requires prior phosphorylation on Thr-187. Ubiquitinated; by a TRIM21-containing SCF(SKP2)-like complex; leads to its degradation. Post-translationally, subject to degradation in the lysosome. Interaction with SNX6 promotes lysosomal degradation.

The protein localises to the nucleus. Its subcellular location is the cytoplasm. It is found in the endosome. Its function is as follows. Important regulator of cell cycle progression. Inhibits the kinase activity of CDK2 bound to cyclin A, but has little inhibitory activity on CDK2 bound to SPDYA. Involved in G1 arrest. Potent inhibitor of cyclin E- and cyclin A-CDK2 complexes. Forms a complex with cyclin type D-CDK4 complexes and is involved in the assembly, stability, and modulation of CCND1-CDK4 complex activation. Acts either as an inhibitor or an activator of cyclin type D-CDK4 complexes depending on its phosphorylation state and/or stoichometry. This is Cyclin-dependent kinase inhibitor 1B (CDKN1B) from Cricetulus griseus (Chinese hamster).